The chain runs to 419 residues: Haloacid dehalogenase-like hydrolase domain-containing 5 (419 aa).

The signal sequence occupies residues 1 to 15; that stretch reads MAALAGLGVLGAGRH.

It belongs to the HAD-like hydrolase superfamily.

The sequence is that of Haloacid dehalogenase-like hydrolase domain-containing 5 from Mus musculus (Mouse).